A 144-amino-acid polypeptide reads, in one-letter code: NADH dehydrogenase [ubiquinone] 1 alpha subcomplex subunit 13 (144 aa).

A2 is modified (N-acetylalanine). A helical transmembrane segment spans residues 30 to 51 (LSGYSMLAIGIGTLIYGHWSIM). Residues 102–144 (PDWKVGESVFHTTRWVPPLIGELYGLRTTEEALHASHGFMWYT) form an important for inducing cell death region.

Belongs to the complex I NDUFA13 subunit family. Complex I is composed of 45 different subunits. Interacts with CARD15, but not with CARD4. Interacts with STAT3, but not with STAT1, STAT2 and STAT5A. Interacts with OLFM4. In terms of assembly, (Microbial infection) Interacts with HHV-8 IRF1, in the nucleus, with HPV-16 E6 and SV40 LT. Widely expressed, with highest expression in heart, skeletal muscle, liver, kidney and placenta. In intestinal mucosa, down-regulated in areas involved in Crohn disease and ulcerative colitis.

The protein localises to the mitochondrion inner membrane. It is found in the nucleus. In terms of biological role, accessory subunit of the mitochondrial membrane respiratory chain NADH dehydrogenase (Complex I), that is believed not to be involved in catalysis. Complex I functions in the transfer of electrons from NADH to the respiratory chain. The immediate electron acceptor for the enzyme is believed to be ubiquinone. Involved in the interferon/all-trans-retinoic acid (IFN/RA) induced cell death. This apoptotic activity is inhibited by interaction with viral IRF1. Prevents the transactivation of STAT3 target genes. May play a role in CARD15-mediated innate mucosal responses and serve to regulate intestinal epithelial cell responses to microbes. The sequence is that of NADH dehydrogenase [ubiquinone] 1 alpha subcomplex subunit 13 (NDUFA13) from Homo sapiens (Human).